We begin with the raw amino-acid sequence, 476 residues long: Adenosylhomocysteinase (476 aa).

Positions 67, 142, and 202 each coordinate substrate. Position 203–205 (203–205) interacts with NAD(+); sequence TTT. Residues lysine 232 and aspartate 236 each coordinate substrate. NAD(+)-binding positions include asparagine 237, 266–271, glutamate 289, asparagine 324, 345–347, and asparagine 390; these read GYGDVG and IGH.

The protein belongs to the adenosylhomocysteinase family. It depends on NAD(+) as a cofactor.

It is found in the cytoplasm. The enzyme catalyses S-adenosyl-L-homocysteine + H2O = L-homocysteine + adenosine. It functions in the pathway amino-acid biosynthesis; L-homocysteine biosynthesis; L-homocysteine from S-adenosyl-L-homocysteine: step 1/1. Functionally, may play a key role in the regulation of the intracellular concentration of adenosylhomocysteine. The polypeptide is Adenosylhomocysteinase (Parasynechococcus marenigrum (strain WH8102)).